The primary structure comprises 186 residues: Signal peptidase I P (186 aa).

Residues 1 to 15 (MTKEKVFKKKSSILE) lie on the Cytoplasmic side of the membrane. Residues 16–35 (WGKAIVIAVILALLIRNFLF) form a helical membrane-spanning segment. The Extracellular segment spans residues 36-186 (EPYVVEGKSM…FPFSNMRKAK (151 aa)). Active-site residues include Ser44 and Lys86.

This sequence belongs to the peptidase S26 family.

It is found in the cell membrane. It catalyses the reaction Cleavage of hydrophobic, N-terminal signal or leader sequences from secreted and periplasmic proteins.. In Bacillus subtilis subsp. natto, this protein is Signal peptidase I P (sipP).